A 548-amino-acid polypeptide reads, in one-letter code: Esterase-5A (548 aa).

An N-terminal signal peptide occupies residues 1 to 21; the sequence is MHLVRWLICLIQLWVQLGAAG. A disulfide bridge links Cys-87 with Cys-106. N-linked (GlcNAc...) asparagine glycosylation is found at Asn-95 and Asn-116. Ser-210 serves as the catalytic Acyl-ester intermediate. Cys-262 and Cys-274 are oxidised to a cystine. N-linked (GlcNAc...) asparagine glycosylation is present at Asn-479. Cysteines 518 and 539 form a disulfide.

The protein belongs to the type-B carboxylesterase/lipase family.

The protein resides in the secreted. The enzyme catalyses a carboxylic ester + H2O = an alcohol + a carboxylate + H(+). This is Esterase-5A (Est-5A) from Drosophila pseudoobscura pseudoobscura (Fruit fly).